We begin with the raw amino-acid sequence, 429 residues long: 3-phosphoshikimate 1-carboxyvinyltransferase (429 aa).

Residues lysine 11, serine 12, and arginine 16 each contribute to the 3-phosphoshikimate site. Phosphoenolpyruvate is bound at residue lysine 11. Phosphoenolpyruvate is bound by residues glycine 82 and arginine 110. Positions 155, 157, 302, and 329 each coordinate 3-phosphoshikimate. Phosphoenolpyruvate is bound at residue glutamine 157. Aspartate 302 (proton acceptor) is an active-site residue. Arginine 333 and arginine 385 together coordinate phosphoenolpyruvate.

This sequence belongs to the EPSP synthase family. As to quaternary structure, monomer.

The protein resides in the cytoplasm. It catalyses the reaction 3-phosphoshikimate + phosphoenolpyruvate = 5-O-(1-carboxyvinyl)-3-phosphoshikimate + phosphate. The protein operates within metabolic intermediate biosynthesis; chorismate biosynthesis; chorismate from D-erythrose 4-phosphate and phosphoenolpyruvate: step 6/7. Functionally, catalyzes the transfer of the enolpyruvyl moiety of phosphoenolpyruvate (PEP) to the 5-hydroxyl of shikimate-3-phosphate (S3P) to produce enolpyruvyl shikimate-3-phosphate and inorganic phosphate. The protein is 3-phosphoshikimate 1-carboxyvinyltransferase of Helicobacter pylori (strain Shi470).